Consider the following 429-residue polypeptide: Phosphoglucosamine mutase (429 aa).

Residue Ser-96 is the Phosphoserine intermediate of the active site. Mg(2+) contacts are provided by Ser-96, Asp-230, Asp-232, and Asp-234. Ser-96 carries the post-translational modification Phosphoserine.

Belongs to the phosphohexose mutase family. It depends on Mg(2+) as a cofactor. Post-translationally, activated by phosphorylation.

The enzyme catalyses alpha-D-glucosamine 1-phosphate = D-glucosamine 6-phosphate. Its function is as follows. Catalyzes the conversion of glucosamine-6-phosphate to glucosamine-1-phosphate. This is Phosphoglucosamine mutase from Thermotoga petrophila (strain ATCC BAA-488 / DSM 13995 / JCM 10881 / RKU-1).